The primary structure comprises 179 residues: Large ribosomal subunit protein uL5 (179 aa).

It belongs to the universal ribosomal protein uL5 family. Part of the 50S ribosomal subunit; part of the 5S rRNA/L5/L18/L25 subcomplex. Contacts the 5S rRNA and the P site tRNA. Forms a bridge to the 30S subunit in the 70S ribosome.

Its function is as follows. This is one of the proteins that bind and probably mediate the attachment of the 5S RNA into the large ribosomal subunit, where it forms part of the central protuberance. In the 70S ribosome it contacts protein S13 of the 30S subunit (bridge B1b), connecting the 2 subunits; this bridge is implicated in subunit movement. Contacts the P site tRNA; the 5S rRNA and some of its associated proteins might help stabilize positioning of ribosome-bound tRNAs. The protein is Large ribosomal subunit protein uL5 of Buchnera aphidicola subsp. Acyrthosiphon kondoi (Acyrthosiphon kondoi symbiotic bacterium).